Consider the following 350-residue polypeptide: Putative transport protein YdbI (350 aa).

8 helical membrane-spanning segments follow: residues 18-38 (IFVV…LILL), 67-87 (VVIT…GFVF), 145-165 (ISTF…FLFE), 207-227 (FIIA…MHFP), 229-249 (LFGL…GVVI), 257-277 (IAYS…IFAI), 289-309 (LMSA…IFSE), and 311-331 (FFGI…LDIL).

This sequence belongs to the autoinducer-2 exporter (AI-2E) (TC 2.A.86) family.

Its subcellular location is the cell membrane. The sequence is that of Putative transport protein YdbI (ydbI) from Bacillus subtilis (strain 168).